An 845-amino-acid chain; its full sequence is Protein translocase subunit SecA 1 (845 aa).

ATP-binding positions include glutamine 85, 103–107 (GEGKT), and aspartate 492.

It belongs to the SecA family. In terms of assembly, monomer and homodimer. Part of the essential Sec protein translocation apparatus which comprises SecA, SecYEG and auxiliary proteins SecDF. Other proteins may also be involved.

The protein localises to the cell membrane. Its subcellular location is the cytoplasm. It catalyses the reaction ATP + H2O + cellular proteinSide 1 = ADP + phosphate + cellular proteinSide 2.. Its function is as follows. Part of the Sec protein translocase complex. Interacts with the SecYEG preprotein conducting channel. Has a central role in coupling the hydrolysis of ATP to the transfer of proteins into and across the cell membrane, serving as an ATP-driven molecular motor driving the stepwise translocation of polypeptide chains across the membrane. This is Protein translocase subunit SecA 1 from Corynebacterium efficiens (strain DSM 44549 / YS-314 / AJ 12310 / JCM 11189 / NBRC 100395).